Here is a 188-residue protein sequence, read N- to C-terminus: NADH-quinone oxidoreductase subunit B (188 aa).

[4Fe-4S] cluster is bound by residues C67, C68, C132, and C162.

Belongs to the complex I 20 kDa subunit family. NDH-1 is composed of 14 different subunits. Subunits NuoB, C, D, E, F, and G constitute the peripheral sector of the complex. It depends on [4Fe-4S] cluster as a cofactor.

It localises to the cell inner membrane. The enzyme catalyses a quinone + NADH + 5 H(+)(in) = a quinol + NAD(+) + 4 H(+)(out). Its function is as follows. NDH-1 shuttles electrons from NADH, via FMN and iron-sulfur (Fe-S) centers, to quinones in the respiratory chain. Couples the redox reaction to proton translocation (for every two electrons transferred, four hydrogen ions are translocated across the cytoplasmic membrane), and thus conserves the redox energy in a proton gradient. In Maricaulis maris (strain MCS10) (Caulobacter maris), this protein is NADH-quinone oxidoreductase subunit B.